We begin with the raw amino-acid sequence, 161 residues long: uncharacterized protein (161 aa).

This is an uncharacterized protein from Methanocaldococcus jannaschii (strain ATCC 43067 / DSM 2661 / JAL-1 / JCM 10045 / NBRC 100440) (Methanococcus jannaschii).